The sequence spans 640 residues: Chaperone protein HtpG (640 aa).

The a; substrate-binding stretch occupies residues 1 to 348 (MADVAHQETH…SNDLPLNVSR (348 aa)). Positions 349-565 (EILQDNKITQ…GTGMSTQMIK (217 aa)) are b. The interval 566–640 (LMQAAGQPVP…LNTLLMNLAK (75 aa)) is c.

Belongs to the heat shock protein 90 family. In terms of assembly, homodimer.

The protein localises to the cytoplasm. Its function is as follows. Molecular chaperone. Has ATPase activity. This chain is Chaperone protein HtpG, found in Pseudoalteromonas atlantica (strain T6c / ATCC BAA-1087).